Here is a 341-residue protein sequence, read N- to C-terminus: MAKSHTLNPEEEFEEESGLRPSLLSEFIGQKEVLNNLTVYVQAAKNRKRALDHVLISGPPGLGKTTLAGIISNELGTRLTITSAPVITKGADLARLLTSMGENEILFIDEIHTLPKKLEEILYPAMENYMIDLVIGEGVTAQMVQIPLKPFTLVGATTRSGLISEPLKSRFGIQLRLDYYNDEEMKQIVLRSSKILGVLIEDDAALEIGKRSRKTPRIANHLLKRIRDFSEVEGNLSVKKNLCLKAFEKMGIDDLGLDGMDRQILDCMIDRYKGGPVGLKAIAVVVGEEEKTIEDTYESFMVRIGLINRTPAGRVATEKAYRQLKRMEDFSVHHGQDPTLF.

The segment at 1 to 180 (MAKSHTLNPE…FGIQLRLDYY (180 aa)) is large ATPase domain (RuvB-L). L19, R20, G61, K64, T65, T66, R170, Y180, and R217 together coordinate ATP. Residue T65 participates in Mg(2+) binding. The tract at residues 181–251 (NDEEMKQIVL…LCLKAFEKMG (71 aa)) is small ATPAse domain (RuvB-S). A head domain (RuvB-H) region spans residues 254–341 (DLGLDGMDRQ…VHHGQDPTLF (88 aa)). DNA is bound by residues R309 and R314.

Belongs to the RuvB family. Homohexamer. Forms an RuvA(8)-RuvB(12)-Holliday junction (HJ) complex. HJ DNA is sandwiched between 2 RuvA tetramers; dsDNA enters through RuvA and exits via RuvB. An RuvB hexamer assembles on each DNA strand where it exits the tetramer. Each RuvB hexamer is contacted by two RuvA subunits (via domain III) on 2 adjacent RuvB subunits; this complex drives branch migration. In the full resolvosome a probable DNA-RuvA(4)-RuvB(12)-RuvC(2) complex forms which resolves the HJ.

The protein localises to the cytoplasm. It catalyses the reaction ATP + H2O = ADP + phosphate + H(+). Functionally, the RuvA-RuvB-RuvC complex processes Holliday junction (HJ) DNA during genetic recombination and DNA repair, while the RuvA-RuvB complex plays an important role in the rescue of blocked DNA replication forks via replication fork reversal (RFR). RuvA specifically binds to HJ cruciform DNA, conferring on it an open structure. The RuvB hexamer acts as an ATP-dependent pump, pulling dsDNA into and through the RuvAB complex. RuvB forms 2 homohexamers on either side of HJ DNA bound by 1 or 2 RuvA tetramers; 4 subunits per hexamer contact DNA at a time. Coordinated motions by a converter formed by DNA-disengaged RuvB subunits stimulates ATP hydrolysis and nucleotide exchange. Immobilization of the converter enables RuvB to convert the ATP-contained energy into a lever motion, pulling 2 nucleotides of DNA out of the RuvA tetramer per ATP hydrolyzed, thus driving DNA branch migration. The RuvB motors rotate together with the DNA substrate, which together with the progressing nucleotide cycle form the mechanistic basis for DNA recombination by continuous HJ branch migration. Branch migration allows RuvC to scan DNA until it finds its consensus sequence, where it cleaves and resolves cruciform DNA. In Leptospira interrogans serogroup Icterohaemorrhagiae serovar copenhageni (strain Fiocruz L1-130), this protein is Holliday junction branch migration complex subunit RuvB.